Here is a 498-residue protein sequence, read N- to C-terminus: Putative F-box/FBD/LRR-repeat protein At4g03220 (498 aa).

The 49-residue stretch at 23 to 71 (VDRISNLPDSLNHQILLLLPLKSAAQASLLSKRWRSLFLSLPDLDFTSI) folds into the F-box domain. LRR repeat units follow at residues 148 to 172 (SQNLRALTLKSANLGFRLPPSSSAR), 175 to 200 (FQKLTSLSLSRVILHNQPCLSDFFTD), and 235 to 259 (SLQLEGLEVSGNKLQKLKVESCFYS). In terms of domain architecture, FBD spans 416–466 (YWESQAYELESFLNHLEFVEIHGFVECENEMSLAIFLLRHGKALIKMTLRS).

In Arabidopsis thaliana (Mouse-ear cress), this protein is Putative F-box/FBD/LRR-repeat protein At4g03220.